Here is a 440-residue protein sequence, read N- to C-terminus: Glutamate-1-semialdehyde 2,1-aminomutase (440 aa).

Lysine 273 is subject to N6-(pyridoxal phosphate)lysine.

The protein belongs to the class-III pyridoxal-phosphate-dependent aminotransferase family. HemL subfamily. Homodimer. It depends on pyridoxal 5'-phosphate as a cofactor.

It localises to the cytoplasm. It carries out the reaction (S)-4-amino-5-oxopentanoate = 5-aminolevulinate. It participates in porphyrin-containing compound metabolism; protoporphyrin-IX biosynthesis; 5-aminolevulinate from L-glutamyl-tRNA(Glu): step 2/2. The polypeptide is Glutamate-1-semialdehyde 2,1-aminomutase (Alkaliphilus metalliredigens (strain QYMF)).